We begin with the raw amino-acid sequence, 164 residues long: Small ribosomal subunit protein uS5 (164 aa).

Positions 11–74 constitute an S5 DRBM domain; it reads LKEKLISVNR…EKARKNMIII (64 aa).

This sequence belongs to the universal ribosomal protein uS5 family. In terms of assembly, part of the 30S ribosomal subunit. Contacts proteins S4 and S8.

In terms of biological role, with S4 and S12 plays an important role in translational accuracy. Its function is as follows. Located at the back of the 30S subunit body where it stabilizes the conformation of the head with respect to the body. The polypeptide is Small ribosomal subunit protein uS5 (Buchnera aphidicola subsp. Cinara cedri (strain Cc)).